The chain runs to 225 residues: 7-cyano-7-deazaguanine synthase (225 aa).

7–17 is an ATP binding site; that stretch reads LSGGMDSTTLL. Residues C183, C191, C194, and C197 each coordinate Zn(2+).

The protein belongs to the QueC family. Homodimer. The cofactor is Zn(2+).

The enzyme catalyses 7-carboxy-7-deazaguanine + NH4(+) + ATP = 7-cyano-7-deazaguanine + ADP + phosphate + H2O + H(+). The protein operates within purine metabolism; 7-cyano-7-deazaguanine biosynthesis. In terms of biological role, catalyzes the ATP-dependent conversion of 7-carboxy-7-deazaguanine (CDG) to 7-cyano-7-deazaguanine (preQ(0)). In Caldicellulosiruptor saccharolyticus (strain ATCC 43494 / DSM 8903 / Tp8T 6331), this protein is 7-cyano-7-deazaguanine synthase.